The following is a 473-amino-acid chain: Siroheme synthase (473 aa).

The segment at 1–203 is precorrin-2 dehydrogenase /sirohydrochlorin ferrochelatase; the sequence is MNYLPIFIDL…GNKEQAINVL (203 aa). Residues 22–23 and 43–44 contribute to the NAD(+) site; these read EV and KE. Phosphoserine is present on Ser-128. The segment at 215-473 is uroporphyrinogen-III C-methyltransferase; that stretch reads GEIILVGAGP…KNKFSTLTFI (259 aa). An S-adenosyl-L-methionine-binding site is contributed by Pro-224. Residue Asp-247 is the Proton acceptor of the active site. Lys-269 functions as the Proton donor in the catalytic mechanism. Residues 300–302, Ile-305, Met-382, and Gly-411 contribute to the S-adenosyl-L-methionine site; that span reads GGD.

This sequence in the N-terminal section; belongs to the precorrin-2 dehydrogenase / sirohydrochlorin ferrochelatase family. In the C-terminal section; belongs to the precorrin methyltransferase family.

It catalyses the reaction uroporphyrinogen III + 2 S-adenosyl-L-methionine = precorrin-2 + 2 S-adenosyl-L-homocysteine + H(+). It carries out the reaction precorrin-2 + NAD(+) = sirohydrochlorin + NADH + 2 H(+). The catalysed reaction is siroheme + 2 H(+) = sirohydrochlorin + Fe(2+). Its pathway is cofactor biosynthesis; adenosylcobalamin biosynthesis; precorrin-2 from uroporphyrinogen III: step 1/1. It participates in cofactor biosynthesis; adenosylcobalamin biosynthesis; sirohydrochlorin from precorrin-2: step 1/1. The protein operates within porphyrin-containing compound metabolism; siroheme biosynthesis; precorrin-2 from uroporphyrinogen III: step 1/1. It functions in the pathway porphyrin-containing compound metabolism; siroheme biosynthesis; siroheme from sirohydrochlorin: step 1/1. Its pathway is porphyrin-containing compound metabolism; siroheme biosynthesis; sirohydrochlorin from precorrin-2: step 1/1. Multifunctional enzyme that catalyzes the SAM-dependent methylations of uroporphyrinogen III at position C-2 and C-7 to form precorrin-2 via precorrin-1. Then it catalyzes the NAD-dependent ring dehydrogenation of precorrin-2 to yield sirohydrochlorin. Finally, it catalyzes the ferrochelation of sirohydrochlorin to yield siroheme. This chain is Siroheme synthase, found in Buchnera aphidicola subsp. Acyrthosiphon pisum (strain APS) (Acyrthosiphon pisum symbiotic bacterium).